The sequence spans 184 residues: Mediator of RNA polymerase II transcription subunit 28 (184 aa).

A coiled-coil region spans residues 77–105 (LLKEENFDLKQEIARKDELIRKHYEKIES).

It belongs to the Mediator complex subunit 28 family. In terms of assembly, component of the Mediator complex.

The protein localises to the nucleus. Its function is as follows. Component of the Mediator complex, a coactivator involved in the regulated transcription of nearly all RNA polymerase II-dependent genes. Mediator functions as a bridge to convey information from gene-specific regulatory proteins to the basal RNA polymerase II transcription machinery. Mediator is recruited to promoters by direct interactions with regulatory proteins and serves as a scaffold for the assembly of a functional preinitiation complex with RNA polymerase II and the general transcription factors. This is Mediator of RNA polymerase II transcription subunit 28 (MED28) from Aedes aegypti (Yellowfever mosquito).